The following is a 66-amino-acid chain: MPGVYLEESDNFDVALRRFKKQVEKSGILSELKKRQHFEKPSVMRKKKKAAARKRLLKKMRKINMM.

Belongs to the bacterial ribosomal protein bS21 family.

This is Small ribosomal subunit protein bS21 from Solidesulfovibrio magneticus (strain ATCC 700980 / DSM 13731 / RS-1) (Desulfovibrio magneticus).